The primary structure comprises 623 residues: DNA polymerase alpha subunit B (623 aa).

Residues 113–151 are disordered; sequence IPKIKDEPSSSVDVSTARNKNNHNNNNNNNPSLPNKSMF. The span at 121–130 shows a compositional bias: polar residues; the sequence is SSSVDVSTAR.

The protein belongs to the DNA polymerase alpha subunit B family. DNA polymerase alpha:primase is a four subunit enzyme complex, which is assembled throughout the cell cycle, and consists of the two DNA polymerase subunits A and B, and the DNA primase large and small subunits. Subunit B binds to subunit A.

It is found in the nucleus. May play an essential role at the early stage of chromosomal DNA replication by coupling the polymerase alpha/primase complex to the cellular replication machinery. This Dictyostelium discoideum (Social amoeba) protein is DNA polymerase alpha subunit B (polA2).